A 265-amino-acid chain; its full sequence is 5'-nucleotidase SurE (265 aa).

Positions 8, 9, 40, and 98 each coordinate a divalent metal cation.

It belongs to the SurE nucleotidase family. Requires a divalent metal cation as cofactor.

It localises to the cytoplasm. It carries out the reaction a ribonucleoside 5'-phosphate + H2O = a ribonucleoside + phosphate. Its function is as follows. Nucleotidase that shows phosphatase activity on nucleoside 5'-monophosphates. This is 5'-nucleotidase SurE from Trichormus variabilis (strain ATCC 29413 / PCC 7937) (Anabaena variabilis).